A 138-amino-acid chain; its full sequence is Probable phospholipase A2 homolog 1 (138 aa).

Residues 1–21 (MPPRSPLLALVFLAAGVLSSA) form the signal peptide. 6 disulfide bridges follow: cysteine 29–cysteine 56, cysteine 33–cysteine 62, cysteine 38–cysteine 109, cysteine 49–cysteine 69, cysteine 68–cysteine 93, and cysteine 75–cysteine 86. Ca(2+)-binding residues include tyrosine 48, glycine 50, and tryptophan 53. Histidine 72 is an active-site residue. Position 73 (aspartate 73) interacts with Ca(2+).

The protein belongs to the phospholipase A2 family. It depends on Ca(2+) as a cofactor.

The protein localises to the secreted. The catalysed reaction is a 1,2-diacyl-sn-glycero-3-phosphocholine + H2O = a 1-acyl-sn-glycero-3-phosphocholine + a fatty acid + H(+). Its function is as follows. PA2 catalyzes the calcium-dependent hydrolysis of the 2-acyl groups in 3-sn-phosphoglycerides. Releases lysophospholipids (LPLs) and free fatty acids (FFAs) from membrane phospholipids in response to hormones and other external stimuli. The polypeptide is Probable phospholipase A2 homolog 1 (PLA2-I) (Oryza sativa subsp. japonica (Rice)).